The following is a 257-amino-acid chain: DNA repair protein RecO (257 aa).

The protein belongs to the RecO family.

In terms of biological role, involved in DNA repair and RecF pathway recombination. The polypeptide is DNA repair protein RecO (Synechococcus sp. (strain CC9605)).